Consider the following 250-residue polypeptide: Tryptophan synthase alpha chain (250 aa).

Residues Glu-31 and Asp-42 each act as proton acceptor in the active site.

Belongs to the TrpA family. As to quaternary structure, tetramer of two alpha and two beta chains.

It carries out the reaction (1S,2R)-1-C-(indol-3-yl)glycerol 3-phosphate + L-serine = D-glyceraldehyde 3-phosphate + L-tryptophan + H2O. Its pathway is amino-acid biosynthesis; L-tryptophan biosynthesis; L-tryptophan from chorismate: step 5/5. The alpha subunit is responsible for the aldol cleavage of indoleglycerol phosphate to indole and glyceraldehyde 3-phosphate. The chain is Tryptophan synthase alpha chain from Staphylococcus carnosus (strain TM300).